A 191-amino-acid chain; its full sequence is Ribosome maturation factor RimM (191 aa).

Residues 107–184 (EDDEWHQDDL…LVLVSPPPGL (78 aa)) enclose the PRC barrel domain.

It belongs to the RimM family. In terms of assembly, binds ribosomal protein uS19.

It localises to the cytoplasm. In terms of biological role, an accessory protein needed during the final step in the assembly of 30S ribosomal subunit, possibly for assembly of the head region. Essential for efficient processing of 16S rRNA. May be needed both before and after RbfA during the maturation of 16S rRNA. It has affinity for free ribosomal 30S subunits but not for 70S ribosomes. In Kocuria rhizophila (strain ATCC 9341 / DSM 348 / NBRC 103217 / DC2201), this protein is Ribosome maturation factor RimM.